A 179-amino-acid polypeptide reads, in one-letter code: Nuclear transcription factor Y subunit B (179 aa).

The tract at residues 1 to 32 (MAEAPASPGGGGGSHESGSPRGGGGGGSVREQ) is disordered. Over residues 8–28 (PGGGGGSHESGSPRGGGGGGS) the composition is skewed to gly residues. Residues 36–42 (LPIANIS) mediate DNA binding. Positions 63-74 (VQECVSEFISFI) are subunit association domain (SAD). Residues 147 to 179 (SSSAAEGMGQQGAYNQGMGYMQPQYHNGDISNV) are disordered.

It belongs to the NFYB/HAP3 subunit family. Heterotrimeric transcription factor composed of three components, NF-YA, NF-YB and NF-YC. NF-YB and NF-YC must interact and dimerize for NF-YA association and DNA binding.

It is found in the nucleus. In terms of biological role, component of the NF-Y/HAP transcription factor complex. The NF-Y complex stimulates the transcription of various genes by recognizing and binding to a CCAAT motif in promoters. The polypeptide is Nuclear transcription factor Y subunit B (NFY2) (Zea mays (Maize)).